A 172-amino-acid polypeptide reads, in one-letter code: Methylated-DNA--protein-cysteine methyltransferase (172 aa).

Residue Cys142 is the Nucleophile; methyl group acceptor of the active site.

It belongs to the MGMT family.

Its subcellular location is the cytoplasm. It carries out the reaction a 6-O-methyl-2'-deoxyguanosine in DNA + L-cysteinyl-[protein] = S-methyl-L-cysteinyl-[protein] + a 2'-deoxyguanosine in DNA. It catalyses the reaction a 4-O-methyl-thymidine in DNA + L-cysteinyl-[protein] = a thymidine in DNA + S-methyl-L-cysteinyl-[protein]. Involved in the cellular defense against the biological effects of O6-methylguanine (O6-MeG) and O4-methylthymine (O4-MeT) in DNA. Repairs the methylated nucleobase in DNA by stoichiometrically transferring the methyl group to a cysteine residue in the enzyme. This is a suicide reaction: the enzyme is irreversibly inactivated. This is Methylated-DNA--protein-cysteine methyltransferase from Pyrococcus horikoshii (strain ATCC 700860 / DSM 12428 / JCM 9974 / NBRC 100139 / OT-3).